We begin with the raw amino-acid sequence, 468 residues long: 3-isopropylmalate dehydratase large subunit (468 aa).

[4Fe-4S] cluster is bound by residues cysteine 347, cysteine 407, and cysteine 410.

Belongs to the aconitase/IPM isomerase family. LeuC type 1 subfamily. As to quaternary structure, heterodimer of LeuC and LeuD. It depends on [4Fe-4S] cluster as a cofactor.

The enzyme catalyses (2R,3S)-3-isopropylmalate = (2S)-2-isopropylmalate. It functions in the pathway amino-acid biosynthesis; L-leucine biosynthesis; L-leucine from 3-methyl-2-oxobutanoate: step 2/4. Catalyzes the isomerization between 2-isopropylmalate and 3-isopropylmalate, via the formation of 2-isopropylmaleate. The chain is 3-isopropylmalate dehydratase large subunit from Campylobacter jejuni subsp. jejuni serotype O:6 (strain 81116 / NCTC 11828).